Here is a 299-residue protein sequence, read N- to C-terminus: NAD kinase (299 aa).

The active-site Proton acceptor is the aspartate 64. Residues 64–65, 138–139, arginine 149, arginine 166, aspartate 168, 179–184, and glutamine 238 each bind NAD(+); these read DG, ND, and TGYAVS.

The protein belongs to the NAD kinase family. It depends on a divalent metal cation as a cofactor.

It is found in the cytoplasm. It carries out the reaction NAD(+) + ATP = ADP + NADP(+) + H(+). Involved in the regulation of the intracellular balance of NAD and NADP, and is a key enzyme in the biosynthesis of NADP. Catalyzes specifically the phosphorylation on 2'-hydroxyl of the adenosine moiety of NAD to yield NADP. In Nitratidesulfovibrio vulgaris (strain ATCC 29579 / DSM 644 / CCUG 34227 / NCIMB 8303 / VKM B-1760 / Hildenborough) (Desulfovibrio vulgaris), this protein is NAD kinase.